Reading from the N-terminus, the 72-residue chain is Translation initiation factor IF-1 2 (72 aa).

The 72-residue stretch at 1-72 (MAKDDVIQMQ…SRARIVFRTK (72 aa)) folds into the S1-like domain.

It belongs to the IF-1 family. In terms of assembly, component of the 30S ribosomal translation pre-initiation complex which assembles on the 30S ribosome in the order IF-2 and IF-3, IF-1 and N-formylmethionyl-tRNA(fMet); mRNA recruitment can occur at any time during PIC assembly.

The protein localises to the cytoplasm. One of the essential components for the initiation of protein synthesis. Stabilizes the binding of IF-2 and IF-3 on the 30S subunit to which N-formylmethionyl-tRNA(fMet) subsequently binds. Helps modulate mRNA selection, yielding the 30S pre-initiation complex (PIC). Upon addition of the 50S ribosomal subunit IF-1, IF-2 and IF-3 are released leaving the mature 70S translation initiation complex. The protein is Translation initiation factor IF-1 2 of Cupriavidus metallidurans (strain ATCC 43123 / DSM 2839 / NBRC 102507 / CH34) (Ralstonia metallidurans).